We begin with the raw amino-acid sequence, 417 residues long: Serine hydroxymethyltransferase (417 aa).

(6S)-5,6,7,8-tetrahydrofolate is bound by residues Leu120 and 124–126 (GHL). Lys229 is subject to N6-(pyridoxal phosphate)lysine. 354–356 (SPF) contacts (6S)-5,6,7,8-tetrahydrofolate.

It belongs to the SHMT family. In terms of assembly, homodimer. Pyridoxal 5'-phosphate serves as cofactor.

Its subcellular location is the cytoplasm. It carries out the reaction (6R)-5,10-methylene-5,6,7,8-tetrahydrofolate + glycine + H2O = (6S)-5,6,7,8-tetrahydrofolate + L-serine. It participates in one-carbon metabolism; tetrahydrofolate interconversion. It functions in the pathway amino-acid biosynthesis; glycine biosynthesis; glycine from L-serine: step 1/1. Catalyzes the reversible interconversion of serine and glycine with tetrahydrofolate (THF) serving as the one-carbon carrier. This reaction serves as the major source of one-carbon groups required for the biosynthesis of purines, thymidylate, methionine, and other important biomolecules. Also exhibits THF-independent aldolase activity toward beta-hydroxyamino acids, producing glycine and aldehydes, via a retro-aldol mechanism. This is Serine hydroxymethyltransferase from Acinetobacter baumannii (strain AB307-0294).